The chain runs to 235 residues: Thiamine import ATP-binding protein ThiQ (235 aa).

Positions L2–I230 constitute an ABC transporter domain. Position 32-39 (G32–S39) interacts with ATP.

The protein belongs to the ABC transporter superfamily. Thiamine importer (TC 3.A.1.19.1) family. In terms of assembly, the complex is composed of two ATP-binding proteins (ThiQ), two transmembrane proteins (ThiP) and a solute-binding protein (ThiB).

It is found in the cell inner membrane. It carries out the reaction thiamine(out) + ATP + H2O = thiamine(in) + ADP + phosphate + H(+). In terms of biological role, part of the ABC transporter complex ThiBPQ involved in thiamine import. Responsible for energy coupling to the transport system. The sequence is that of Thiamine import ATP-binding protein ThiQ from Salmonella choleraesuis (strain SC-B67).